The following is a 287-amino-acid chain: Polyamine aminopropyltransferase (287 aa).

Positions 9–242 constitute a PABS domain; that stretch reads GSWLDEYQND…GIWSWTFASI (234 aa). S-methyl-5'-thioadenosine is bound at residue Q36. Spermidine contacts are provided by H67 and D91. S-methyl-5'-thioadenosine-binding positions include E111 and 143–144; that span reads NG. The active-site Proton acceptor is D162. P169 contacts S-methyl-5'-thioadenosine.

The protein belongs to the spermidine/spermine synthase family. In terms of assembly, homodimer or homotetramer.

Its subcellular location is the cytoplasm. The catalysed reaction is S-adenosyl 3-(methylsulfanyl)propylamine + putrescine = S-methyl-5'-thioadenosine + spermidine + H(+). Its pathway is amine and polyamine biosynthesis; spermidine biosynthesis; spermidine from putrescine: step 1/1. Catalyzes the irreversible transfer of a propylamine group from the amino donor S-adenosylmethioninamine (decarboxy-AdoMet) to putrescine (1,4-diaminobutane) to yield spermidine. This Prochlorococcus marinus (strain SARG / CCMP1375 / SS120) protein is Polyamine aminopropyltransferase.